The chain runs to 586 residues: 2-succinyl-5-enolpyruvyl-6-hydroxy-3-cyclohexene-1-carboxylate synthase (586 aa).

It belongs to the TPP enzyme family. MenD subfamily. As to quaternary structure, homodimer. It depends on Mg(2+) as a cofactor. The cofactor is Mn(2+). Thiamine diphosphate serves as cofactor.

It catalyses the reaction isochorismate + 2-oxoglutarate + H(+) = 5-enolpyruvoyl-6-hydroxy-2-succinyl-cyclohex-3-ene-1-carboxylate + CO2. The protein operates within quinol/quinone metabolism; 1,4-dihydroxy-2-naphthoate biosynthesis; 1,4-dihydroxy-2-naphthoate from chorismate: step 2/7. Its pathway is quinol/quinone metabolism; menaquinone biosynthesis. Catalyzes the thiamine diphosphate-dependent decarboxylation of 2-oxoglutarate and the subsequent addition of the resulting succinic semialdehyde-thiamine pyrophosphate anion to isochorismate to yield 2-succinyl-5-enolpyruvyl-6-hydroxy-3-cyclohexene-1-carboxylate (SEPHCHC). The chain is 2-succinyl-5-enolpyruvyl-6-hydroxy-3-cyclohexene-1-carboxylate synthase from Natronomonas pharaonis (strain ATCC 35678 / DSM 2160 / CIP 103997 / JCM 8858 / NBRC 14720 / NCIMB 2260 / Gabara) (Halobacterium pharaonis).